A 338-amino-acid chain; its full sequence is Ornithine carbamoyltransferase, catabolic (338 aa).

Carbamoyl phosphate is bound by residues 58–61 (STRT), Q85, R109, and 136–139 (HPTQ). L-ornithine-binding positions include N168, D232, and 236 to 237 (SM). Residues 273–274 (CL) and R318 contribute to the carbamoyl phosphate site.

It belongs to the aspartate/ornithine carbamoyltransferase superfamily. OTCase family.

It localises to the cytoplasm. It carries out the reaction carbamoyl phosphate + L-ornithine = L-citrulline + phosphate + H(+). It participates in amino-acid degradation; L-arginine degradation via ADI pathway; carbamoyl phosphate from L-arginine: step 2/2. In terms of biological role, reversibly catalyzes the transfer of the carbamoyl group from carbamoyl phosphate (CP) to the N(epsilon) atom of ornithine (ORN) to produce L-citrulline. This chain is Ornithine carbamoyltransferase, catabolic, found in Streptococcus gordonii (strain Challis / ATCC 35105 / BCRC 15272 / CH1 / DL1 / V288).